The following is a 1322-amino-acid chain: Phosphoribosylformylglycinamidine synthase (1322 aa).

ATP contacts are provided by residues 300–311 (GASTGAGGEIRD) and Ala702. 4 residues coordinate Mg(2+): Asp703, Glu742, Asn746, and Asp915. Ser917 lines the ATP pocket. Residues 1073–1322 (VAILREQGIN…LFRNARAWVG (250 aa)) enclose the Glutamine amidotransferase type-1 domain. Cys1166 functions as the Nucleophile in the catalytic mechanism. Residues His1287 and Glu1289 contribute to the active site.

It in the N-terminal section; belongs to the FGAMS family. As to quaternary structure, monomer.

The protein resides in the cytoplasm. The enzyme catalyses N(2)-formyl-N(1)-(5-phospho-beta-D-ribosyl)glycinamide + L-glutamine + ATP + H2O = 2-formamido-N(1)-(5-O-phospho-beta-D-ribosyl)acetamidine + L-glutamate + ADP + phosphate + H(+). It participates in purine metabolism; IMP biosynthesis via de novo pathway; 5-amino-1-(5-phospho-D-ribosyl)imidazole from N(2)-formyl-N(1)-(5-phospho-D-ribosyl)glycinamide: step 1/2. Functionally, phosphoribosylformylglycinamidine synthase involved in the purines biosynthetic pathway. Catalyzes the ATP-dependent conversion of formylglycinamide ribonucleotide (FGAR) and glutamine to yield formylglycinamidine ribonucleotide (FGAM) and glutamate. This chain is Phosphoribosylformylglycinamidine synthase, found in Xylella fastidiosa (strain Temecula1 / ATCC 700964).